The chain runs to 419 residues: UDP-N-acetylglucosamine 1-carboxyvinyltransferase (419 aa).

22 to 23 (KN) provides a ligand contact to phosphoenolpyruvate. A UDP-N-acetyl-alpha-D-glucosamine-binding site is contributed by Arg-93. Residue Cys-117 is the Proton donor of the active site. Cys-117 is subject to 2-(S-cysteinyl)pyruvic acid O-phosphothioketal. Asp-307 and Ile-329 together coordinate UDP-N-acetyl-alpha-D-glucosamine.

The protein belongs to the EPSP synthase family. MurA subfamily.

Its subcellular location is the cytoplasm. The enzyme catalyses phosphoenolpyruvate + UDP-N-acetyl-alpha-D-glucosamine = UDP-N-acetyl-3-O-(1-carboxyvinyl)-alpha-D-glucosamine + phosphate. The protein operates within cell wall biogenesis; peptidoglycan biosynthesis. Functionally, cell wall formation. Adds enolpyruvyl to UDP-N-acetylglucosamine. The chain is UDP-N-acetylglucosamine 1-carboxyvinyltransferase from Shewanella frigidimarina (strain NCIMB 400).